Here is a 399-residue protein sequence, read N- to C-terminus: STOREKEEPER protein (399 aa).

2 disordered regions span residues 1-160 and 250-301; these read MAPK…RSLW and GISN…EEQQ. The segment covering 20-54 has biased composition (acidic residues); sequence EEQELVEESQEEEEQQSREEEGEEESGEETEEDEE. Polar residues predominate over residues 69 to 79; the sequence is KLVQTPQKPQF. Composition is skewed to low complexity over residues 80–100 and 116–125; these read SSES…SGNS and AAKAATPSKP. Composition is skewed to basic and acidic residues over residues 143 to 152 and 270 to 299; these read KIAEEEEKKS and KTVE…KEEE.

Belongs to the GeBP family. As to expression, expressed in tubers and in leaves treated with sucrose.

Its subcellular location is the nucleus. Its function is as follows. May act as a transcriptional regulator. Binds specifically to the B-box motif, a promoter element that is required for the tuber-specific and sucrose inducible expression of the patatin gene. This Solanum tuberosum (Potato) protein is STOREKEEPER protein.